Here is a 1058-residue protein sequence, read N- to C-terminus: Carbamoyl phosphate synthase large chain (1058 aa).

Residues 1-401 form a carboxyphosphate synthetic domain region; the sequence is MAKRTDIKKI…CLLKACRSLE (401 aa). ATP is bound by residues Arg-129, Arg-169, Gly-175, Gly-176, Arg-208, Ile-210, Glu-215, Gly-241, Ile-242, His-243, Gln-284, and Glu-298. An ATP-grasp 1 domain is found at 133 to 327; it reads KQLMKELGEP…IAKIAAKIAV (195 aa). Mg(2+)-binding residues include Gln-284, Glu-298, and Asn-300. 3 residues coordinate Mn(2+): Gln-284, Glu-298, and Asn-300. The oligomerization domain stretch occupies residues 402–546; it reads IGVHHNELKG…YSTYEWENES (145 aa). Residues 547–929 form a carbamoyl phosphate synthetic domain region; that stretch reads IKSEKESVIV…ALYKAFEASY (383 aa). Positions 671 to 861 constitute an ATP-grasp 2 domain; sequence EKALKELGIP…MAQVATKLIL (191 aa). Residues Arg-707, Ser-746, Ile-748, Glu-752, Gly-777, Val-778, His-779, Ser-780, Gln-820, and Glu-832 each contribute to the ATP site. Positions 820, 832, and 834 each coordinate Mg(2+). Residues Gln-820, Glu-832, and Asn-834 each contribute to the Mn(2+) site. The MGS-like domain maps to 930–1058; sequence LHMPEYGTIV…ESRTFSIEAI (129 aa). Positions 930–1058 are allosteric domain; that stretch reads LHMPEYGTIV…ESRTFSIEAI (129 aa).

Belongs to the CarB family. Composed of two chains; the small (or glutamine) chain promotes the hydrolysis of glutamine to ammonia, which is used by the large (or ammonia) chain to synthesize carbamoyl phosphate. Tetramer of heterodimers (alpha,beta)4. Mg(2+) serves as cofactor. The cofactor is Mn(2+).

It carries out the reaction hydrogencarbonate + L-glutamine + 2 ATP + H2O = carbamoyl phosphate + L-glutamate + 2 ADP + phosphate + 2 H(+). It catalyses the reaction hydrogencarbonate + NH4(+) + 2 ATP = carbamoyl phosphate + 2 ADP + phosphate + 2 H(+). It participates in amino-acid biosynthesis; L-arginine biosynthesis; carbamoyl phosphate from bicarbonate: step 1/1. It functions in the pathway pyrimidine metabolism; UMP biosynthesis via de novo pathway; (S)-dihydroorotate from bicarbonate: step 1/3. In terms of biological role, large subunit of the glutamine-dependent carbamoyl phosphate synthetase (CPSase). CPSase catalyzes the formation of carbamoyl phosphate from the ammonia moiety of glutamine, carbonate, and phosphate donated by ATP, constituting the first step of 2 biosynthetic pathways, one leading to arginine and/or urea and the other to pyrimidine nucleotides. The large subunit (synthetase) binds the substrates ammonia (free or transferred from glutamine from the small subunit), hydrogencarbonate and ATP and carries out an ATP-coupled ligase reaction, activating hydrogencarbonate by forming carboxy phosphate which reacts with ammonia to form carbamoyl phosphate. The polypeptide is Carbamoyl phosphate synthase large chain (Streptococcus equi subsp. equi (strain 4047)).